Here is a 205-residue protein sequence, read N- to C-terminus: Small ribosomal subunit protein uS4 (205 aa).

Positions 1–46 are disordered; that stretch reads MSKRASSKYKIDRRMGENIWGRPKSPVNRREYGPGQHGQRRKGKLS. An S4 RNA-binding domain is found at 94 to 154; sequence SRLDAIVYRA…QKSKQLAIVL (61 aa).

Belongs to the universal ribosomal protein uS4 family. Part of the 30S ribosomal subunit. Contacts protein S5. The interaction surface between S4 and S5 is involved in control of translational fidelity.

Its function is as follows. One of the primary rRNA binding proteins, it binds directly to 16S rRNA where it nucleates assembly of the body of the 30S subunit. Functionally, with S5 and S12 plays an important role in translational accuracy. This Allorhizobium ampelinum (strain ATCC BAA-846 / DSM 112012 / S4) (Agrobacterium vitis (strain S4)) protein is Small ribosomal subunit protein uS4.